Consider the following 266-residue polypeptide: ATP synthase subunit a (266 aa).

7 helical membrane-spanning segments follow: residues 28-48 (ISFT…AIFM), 90-110 (LIFT…VPLF), 125-145 (VTVT…VGFT), 158-178 (HGTP…SFIL), 187-207 (LFVA…FIVN), 216-236 (AFLA…MIGI), and 239-259 (LEFL…SLYL).

The protein belongs to the ATPase A chain family. As to quaternary structure, F-type ATPases have 2 components, CF(1) - the catalytic core - and CF(0) - the membrane proton channel. CF(1) has five subunits: alpha(3), beta(3), gamma(1), delta(1), epsilon(1). CF(0) has three main subunits: a(1), b(2) and c(9-12). The alpha and beta chains form an alternating ring which encloses part of the gamma chain. CF(1) is attached to CF(0) by a central stalk formed by the gamma and epsilon chains, while a peripheral stalk is formed by the delta and b chains.

It is found in the cell inner membrane. Functionally, key component of the proton channel; it plays a direct role in the translocation of protons across the membrane. This Zymomonas mobilis subsp. mobilis (strain ATCC 31821 / ZM4 / CP4) protein is ATP synthase subunit a.